The following is a 484-amino-acid chain: UDP-N-acetylmuramoyl-L-alanyl-D-glutamate--2,6-diaminopimelate ligase (484 aa).

UDP-N-acetyl-alpha-D-muramoyl-L-alanyl-D-glutamate is bound at residue Ser29. 108-114 (GTSGKTS) provides a ligand contact to ATP. UDP-N-acetyl-alpha-D-muramoyl-L-alanyl-D-glutamate-binding positions include 150–151 (TT), Ser177, Gln183, and Arg185. Position 217 is an N6-carboxylysine (Lys217). Residues Arg381, 405-408 (DNPR), Gly453, and Glu457 contribute to the meso-2,6-diaminopimelate site. Residues 405 to 408 (DNPR) carry the Meso-diaminopimelate recognition motif motif.

This sequence belongs to the MurCDEF family. MurE subfamily. It depends on Mg(2+) as a cofactor. Carboxylation is probably crucial for Mg(2+) binding and, consequently, for the gamma-phosphate positioning of ATP.

The protein localises to the cytoplasm. The catalysed reaction is UDP-N-acetyl-alpha-D-muramoyl-L-alanyl-D-glutamate + meso-2,6-diaminopimelate + ATP = UDP-N-acetyl-alpha-D-muramoyl-L-alanyl-gamma-D-glutamyl-meso-2,6-diaminopimelate + ADP + phosphate + H(+). Its pathway is cell wall biogenesis; peptidoglycan biosynthesis. Catalyzes the addition of meso-diaminopimelic acid to the nucleotide precursor UDP-N-acetylmuramoyl-L-alanyl-D-glutamate (UMAG) in the biosynthesis of bacterial cell-wall peptidoglycan. This is UDP-N-acetylmuramoyl-L-alanyl-D-glutamate--2,6-diaminopimelate ligase from Mesorhizobium japonicum (strain LMG 29417 / CECT 9101 / MAFF 303099) (Mesorhizobium loti (strain MAFF 303099)).